The primary structure comprises 425 residues: Nicotinate dehydrogenase large molybdopterin subunit (425 aa).

Residues Gln-208 and 238-240 (GFG) each bind Se-Mo-molybdopterin cytosine dinucleotide.

It belongs to the xanthine dehydrogenase family. Heterooctamer of NDHM, NDHL, NDHS and NDHF. Dimer of heterotetramers. It depends on Se-Mo-molybdopterin cytosine dinucleotide as a cofactor.

It carries out the reaction nicotinate + NADP(+) + H2O = 6-hydroxynicotinate + NADPH + H(+). Its pathway is cofactor degradation; nicotinate degradation; 6-hydroxynicotinate from nicotinate: step 1/1. Its activity is regulated as follows. Reversibly inactivated by selenide and sulfide. Not inhibited by cyanide. In terms of biological role, catalyzes the hydroxylation of nicotinate to 6-hydroxynicotinate. Also active against 2-pyrazinecarboxylic acid, but inactive against other nicotinate analogs. This Eubacterium barkeri (Clostridium barkeri) protein is Nicotinate dehydrogenase large molybdopterin subunit (ndhL).